A 65-amino-acid polypeptide reads, in one-letter code: Photosystem II reaction center protein Z (65 aa).

The next 2 membrane-spanning stretches (helical) occupy residues Ala8–Ala28 and Tyr41–Val61.

It belongs to the PsbZ family. PSII is composed of 1 copy each of membrane proteins PsbA, PsbB, PsbC, PsbD, PsbE, PsbF, PsbH, PsbI, PsbJ, PsbK, PsbL, PsbM, PsbT, PsbX, PsbY, PsbZ, Psb30/Ycf12, at least 3 peripheral proteins of the oxygen-evolving complex and a large number of cofactors. It forms dimeric complexes.

It localises to the plastid. It is found in the cyanelle thylakoid membrane. May control the interaction of photosystem II (PSII) cores with the light-harvesting antenna, regulates electron flow through the 2 photosystem reaction centers. PSII is a light-driven water plastoquinone oxidoreductase, using light energy to abstract electrons from H(2)O, generating a proton gradient subsequently used for ATP formation. The sequence is that of Photosystem II reaction center protein Z from Cyanophora paradoxa.